The chain runs to 407 residues: O-antigen polymerase (407 aa).

Transmembrane regions (helical) follow at residues 2–22, 31–51, 63–83, 101–121, 141–161, 168–185, 190–204, 211–231, 319–339, 356–376, and 382–402; these read LIIS…TLSV, VMVP…GIFV, YLFF…SYLY, YVFT…PVLM, YGIY…CAFF, LFCI…FLHG, IFSI…LSYI, FMFL…FFAY, ADFG…KGVL, FIMF…GWLF, and IAFM…RFVL.

The protein localises to the cell inner membrane. The enzyme catalyses n lipid-linked O-antigen repeat units = a lipid-linked O antigen + (n-1) polyisoprenyl diphosphate.. Its pathway is bacterial outer membrane biogenesis; LPS O-antigen biosynthesis. Polymerase involved in the biosynthesis of the lipopolysaccharide (LPS). Catalyzes the polymerization of the O-antigen repeat units on the periplasmic face of the inner membrane, leading to the formation of the lipid-linked O-antigen molecule. In Salmonella typhi, this protein is O-antigen polymerase (rfc).